A 413-amino-acid polypeptide reads, in one-letter code: Histidine--tRNA ligase (413 aa).

This sequence belongs to the class-II aminoacyl-tRNA synthetase family. Homodimer.

The protein resides in the cytoplasm. It catalyses the reaction tRNA(His) + L-histidine + ATP = L-histidyl-tRNA(His) + AMP + diphosphate + H(+). This chain is Histidine--tRNA ligase, found in Ehrlichia canis (strain Jake).